The chain runs to 217 residues: Glyoxalase ElbB (217 aa).

Residue Cys-135 is the Nucleophile of the active site.

It belongs to the peptidase C56 family. In terms of assembly, homodimer.

The catalysed reaction is glyoxal + H2O = glycolate + H(+). In terms of biological role, displays glyoxalase activity, catalyzing the conversion of glyoxal to glycolate. However, this apparent glyoxalase activity may reflect a protein deglycase activity, which could be the primary function of this protein like other DJ-1 superfamily members such as PARK7, YajL, YhbO and HchA. Is not able to use methylglyoxal as substrate. The polypeptide is Glyoxalase ElbB (Escherichia coli (strain K12)).